Consider the following 395-residue polypeptide: uncharacterized protein (395 aa).

The tract at residues 115–144 is disordered; it reads TKPPTEGGPEKDQSSPSQTQAAPQGPSTAS. Residues 128 to 141 are compositionally biased toward low complexity; sequence SSPSQTQAAPQGPS.

This is an uncharacterized protein from Homo sapiens (Human).